Consider the following 470-residue polypeptide: ADAM DEC1 (470 aa).

A signal peptide spans 1-30 (MLRGISQLPAVATMSWVLLPVLWLIVQTQA). Residues 31-205 (IAIKQTPELT…QGPIRISRSL (175 aa)) constitute a propeptide that is removed on maturation. Asn-61 carries an N-linked (GlcNAc...) asparagine glycan. Residues 173–200 (FTSNQEEQDPANHTCGVKSTDGKQGPIR) form a disordered region. Asn-184 carries N-linked (GlcNAc...) (complex) asparagine glycosylation. One can recognise a Peptidase M12B domain in the interval 218 to 412 (KYIDLYLVLD…QKPKCLLQAP (195 aa)). Asn-237 carries an N-linked (GlcNAc...) asparagine glycan. Disulfide bonds link Cys-328–Cys-407 and Cys-369–Cys-374. His-352 provides a ligand contact to Zn(2+). Residue Glu-353 is part of the active site. Zn(2+) contacts are provided by His-356 and Asp-362. The Disintegrin domain occupies 420 to 470 (TPVCGNHLLEVGEDCDCGSPKECTNLCCEALTCKLKPGTDCGGDAPNHTTE). An N-linked (GlcNAc...) asparagine glycan is attached at Asn-466.

It depends on Zn(2+) as a cofactor. Expressed highly in the small intestine and appendix, moderately in lymph node, mucosal lining of the colon, thymus, spleen and very weakly in the bone marrow. Predominantly expressed in dendritic cells (DC) of the germinal center. Weakly expressed in monocyte and highly expressed in macrophage. Absent in immature DC.

It is found in the secreted. Functionally, may play an important role in the control of the immune response and during pregnancy. In Homo sapiens (Human), this protein is ADAM DEC1 (ADAMDEC1).